Reading from the N-terminus, the 476-residue chain is MKLLFAGSECAPFFKTGGLGDVMGALPKTIAKTTDNDVRVVLPFFTGMAEEYKSQLSFVTSFYVKVGWRDQYCGVLKLEMDNVTYYFIDNLYYFDRPGLYGYYDEGERWAFFQQAIIEMLEKIGFIPDILHVNDYHTAFIPFLLKEKYGWINAYQSIKTVLTIHNLQFQGEYGREVLGELFNLDASYYDDGTVRFDTAVNFMKTGILYADKVNTVSPTYASEIQTEAFGQGLDEILRMHNWKLRGILNGIDYERNNPATDKNLVANYSAKKLKGKVKDKLALQKEFGLPQRKDVPVIAMVSRLTAQKGFQLVVSEMQNLVQFDVQVIVLGTGDANFEHDFRYFADTYPDKVGAAITFDVGLAQRIYAGADMFLMPSAFEPCGLSQMISMRYGTLPIVHQIGGLQDSVQPFNPVTGEGTGFGFHDFSGFYMMQEIQEALRLYAESVAWTKVVKQAMSQDFSWETASQEYLNMYNELV.

Lys-15 is a binding site for ADP-alpha-D-glucose.

The protein belongs to the glycosyltransferase 1 family. Bacterial/plant glycogen synthase subfamily.

It catalyses the reaction [(1-&gt;4)-alpha-D-glucosyl](n) + ADP-alpha-D-glucose = [(1-&gt;4)-alpha-D-glucosyl](n+1) + ADP + H(+). It participates in glycan biosynthesis; glycogen biosynthesis. Functionally, synthesizes alpha-1,4-glucan chains using ADP-glucose. The polypeptide is Glycogen synthase (Ligilactobacillus salivarius (strain UCC118) (Lactobacillus salivarius)).